Consider the following 277-residue polypeptide: MATYAIGDIQGCYHSLLSLLELIQFDPVKDKLWLVGDLINRGPGSLETLRWAKSHESSLVMVLGNHDLHALAVAEGYVRAHRSDTLQSIFDAPDRDELLEWLRFRPMMHAEDGMVLVHAGLLPQWSAEQALHLGQEVERALRGDDYHGFLAHMYGNYPVRWEAGLQGMDRLRMITNAMTRLRVCTPDGAMDFDFKGKLADIPPGKMPWFDVPERGSADVTVIFGHWSALGLQQRDNLYALDTGCLWGGKLTALRLEGRQIFQVPCHPADGVRAINGS.

This sequence belongs to the Ap4A hydrolase family.

It carries out the reaction P(1),P(4)-bis(5'-adenosyl) tetraphosphate + H2O = 2 ADP + 2 H(+). In terms of biological role, hydrolyzes diadenosine 5',5'''-P1,P4-tetraphosphate to yield ADP. This Methylobacillus flagellatus (strain ATCC 51484 / DSM 6875 / VKM B-1610 / KT) protein is Bis(5'-nucleosyl)-tetraphosphatase, symmetrical.